The following is a 59-amino-acid chain: Large ribosomal subunit protein uL30 (59 aa).

It belongs to the universal ribosomal protein uL30 family. Part of the 50S ribosomal subunit.

The protein is Large ribosomal subunit protein uL30 of Proteus mirabilis (strain HI4320).